Consider the following 314-residue polypeptide: Ribosomal protein L11 methyltransferase (314 aa).

Residues threonine 161, glycine 182, aspartate 204, and asparagine 248 each contribute to the S-adenosyl-L-methionine site.

The protein belongs to the methyltransferase superfamily. PrmA family.

It is found in the cytoplasm. It catalyses the reaction L-lysyl-[protein] + 3 S-adenosyl-L-methionine = N(6),N(6),N(6)-trimethyl-L-lysyl-[protein] + 3 S-adenosyl-L-homocysteine + 3 H(+). Methylates ribosomal protein L11. The chain is Ribosomal protein L11 methyltransferase from Listeria welshimeri serovar 6b (strain ATCC 35897 / DSM 20650 / CCUG 15529 / CIP 8149 / NCTC 11857 / SLCC 5334 / V8).